The sequence spans 353 residues: Protein RecA (353 aa).

65–72 (GPESSGKT) lines the ATP pocket.

The protein belongs to the RecA family.

It is found in the cytoplasm. Can catalyze the hydrolysis of ATP in the presence of single-stranded DNA, the ATP-dependent uptake of single-stranded DNA by duplex DNA, and the ATP-dependent hybridization of homologous single-stranded DNAs. It interacts with LexA causing its activation and leading to its autocatalytic cleavage. The sequence is that of Protein RecA from Aeromonas salmonicida (strain A449).